Here is a 336-residue protein sequence, read N- to C-terminus: Protein REVEILLE 7-like (336 aa).

One can recognise an HTH myb-type domain in the interval 60–114; it reads TVTKQREKWSEEEHDRFLEAIKLYGRGWRQIQEHIGTKTAVQIRSHAQKFFSKMA. The H-T-H motif DNA-binding region spans 87–110; sequence WRQIQEHIGTKTAVQIRSHAQKFF. Residues 114-197 are disordered; that stretch reads AQEADSRSEG…KQPFKDDSDI (84 aa). Over residues 134-144 the composition is skewed to basic residues; the sequence is RPKRKPAHPYP. The span at 145 to 158 shows a compositional bias: pro residues; the sequence is RKSPVPYTQSPPPN. Residues 167 to 189 show a composition bias toward polar residues; it reads KSPTSVLSSFGSEDQNNYTTSKQ.

Its subcellular location is the nucleus. Probable transcription factor. The polypeptide is Protein REVEILLE 7-like (RVE7L) (Arabidopsis thaliana (Mouse-ear cress)).